The primary structure comprises 269 residues: 5'-nucleotidase SurE (269 aa).

The a divalent metal cation site is built by Asp11, Asp12, Ser43, and Asn101.

This sequence belongs to the SurE nucleotidase family. It depends on a divalent metal cation as a cofactor.

The protein localises to the cytoplasm. The enzyme catalyses a ribonucleoside 5'-phosphate + H2O = a ribonucleoside + phosphate. Nucleotidase that shows phosphatase activity on nucleoside 5'-monophosphates. This Prochlorococcus marinus (strain MIT 9301) protein is 5'-nucleotidase SurE.